A 337-amino-acid chain; its full sequence is ERI1 exoribonuclease 3 (337 aa).

The Exonuclease domain maps to 146-320 (FLVLDFEATC…DDCKNIANIM (175 aa)). Mg(2+)-binding residues include Asp-150, Glu-152, and Asp-249. Glu-152 functions as the Proton acceptor in the catalytic mechanism. Glu-152 provides a ligand contact to AMP. The Proton acceptor role is filled by His-307. Position 307 (His-307) interacts with AMP. Asp-312 provides a ligand contact to Mg(2+).

Interacts with PRNP. The cofactor is Mg(2+).

The sequence is that of ERI1 exoribonuclease 3 (ERI3) from Homo sapiens (Human).